Reading from the N-terminus, the 525-residue chain is NAD(P)H-quinone oxidoreductase chain 4-1 (525 aa).

Transmembrane regions (helical) follow at residues 4–24 (FPWL…IPII), 37–57 (LAVG…GFDL), 89–109 (LIIL…PVTL), 111–131 (PKLF…VFAV), 134–154 (ILLF…ILSI), 167–187 (FILY…TLAF), 210–230 (LLLY…FPLH), 241–261 (TAPA…YALL), 273–293 (AVFA…AAFT), 309–329 (ISHM…GMSG), 330–350 (AMLQ…MVGA), 385–405 (LALP…GFAT), 416–436 (IVVV…LSML), and 462–482 (VFII…PKLI).

The protein belongs to the complex I subunit 4 family.

The protein resides in the cellular thylakoid membrane. The catalysed reaction is a plastoquinone + NADH + (n+1) H(+)(in) = a plastoquinol + NAD(+) + n H(+)(out). It catalyses the reaction a plastoquinone + NADPH + (n+1) H(+)(in) = a plastoquinol + NADP(+) + n H(+)(out). Its function is as follows. NDH-1 shuttles electrons from NAD(P)H, via FMN and iron-sulfur (Fe-S) centers, to quinones in the respiratory chain. The immediate electron acceptor for the enzyme in this species is believed to be plastoquinone. Couples the redox reaction to proton translocation (for every two electrons transferred, four hydrogen ions are translocated across the cytoplasmic membrane), and thus conserves the redox energy in a proton gradient. The protein is NAD(P)H-quinone oxidoreductase chain 4-1 (ndhD1) of Synechocystis sp. (strain ATCC 27184 / PCC 6803 / Kazusa).